The following is a 210-amino-acid chain: Leucyl/phenylalanyl-tRNA--protein transferase (210 aa).

This sequence belongs to the L/F-transferase family.

Its subcellular location is the cytoplasm. It catalyses the reaction N-terminal L-lysyl-[protein] + L-leucyl-tRNA(Leu) = N-terminal L-leucyl-L-lysyl-[protein] + tRNA(Leu) + H(+). The enzyme catalyses N-terminal L-arginyl-[protein] + L-leucyl-tRNA(Leu) = N-terminal L-leucyl-L-arginyl-[protein] + tRNA(Leu) + H(+). It carries out the reaction L-phenylalanyl-tRNA(Phe) + an N-terminal L-alpha-aminoacyl-[protein] = an N-terminal L-phenylalanyl-L-alpha-aminoacyl-[protein] + tRNA(Phe). Its function is as follows. Functions in the N-end rule pathway of protein degradation where it conjugates Leu, Phe and, less efficiently, Met from aminoacyl-tRNAs to the N-termini of proteins containing an N-terminal arginine or lysine. The protein is Leucyl/phenylalanyl-tRNA--protein transferase of Deinococcus radiodurans (strain ATCC 13939 / DSM 20539 / JCM 16871 / CCUG 27074 / LMG 4051 / NBRC 15346 / NCIMB 9279 / VKM B-1422 / R1).